Here is a 428-residue protein sequence, read N- to C-terminus: Enolase (428 aa).

Position 173 (Gln173) interacts with (2R)-2-phosphoglycerate. Glu217 (proton donor) is an active-site residue. Residues Asp253, Glu294, and Asp320 each coordinate Mg(2+). Residues Lys345, Arg374, Ser375, and Lys396 each contribute to the (2R)-2-phosphoglycerate site. Residue Lys345 is the Proton acceptor of the active site.

Belongs to the enolase family. Requires Mg(2+) as cofactor.

It localises to the cytoplasm. The protein localises to the secreted. The protein resides in the cell surface. The enzyme catalyses (2R)-2-phosphoglycerate = phosphoenolpyruvate + H2O. It functions in the pathway carbohydrate degradation; glycolysis; pyruvate from D-glyceraldehyde 3-phosphate: step 4/5. Catalyzes the reversible conversion of 2-phosphoglycerate (2-PG) into phosphoenolpyruvate (PEP). It is essential for the degradation of carbohydrates via glycolysis. The chain is Enolase from Methanosarcina mazei (strain ATCC BAA-159 / DSM 3647 / Goe1 / Go1 / JCM 11833 / OCM 88) (Methanosarcina frisia).